Here is a 317-residue protein sequence, read N- to C-terminus: MESTIPAKPDFSNKVFAKDERFWLNYLEGRPTAPKSFFDRIYRYHEEHRGHFGTVHDVGAGNGPYAKELRLKFSHVIVSDIAAENVTLAQERLGNDGFQYRVSRLEDADDIPPGSVDMVFATNVLHFCDQDVAMRALARQLRPGGTFACASFGSAYFADEKVQEIYTRIGRAGARLLLKTLDDPERLLRAMDRTDGTYNVAPLDEKLFMPGAQRVDLNMPERGMLSPLPPEMEVTERDESHTRPSDVLIQEEEDEWKFSMNIGQIKAHIESFPFGKDVATELSPLWREMENLVQDRRIDGHWPAKIILATRADASVE.

The methyltransferase domain stretch occupies residues 57-149; the sequence is DVGAGNGPYA…QLRPGGTFAC (93 aa).

The protein belongs to the methyltransferase superfamily.

Its pathway is pigment biosynthesis. Methyltransferase; part of the ergochrome gene cluster responsible for the typical purple-black color of the ergot sclerotia. The ergochrome gene cluster produces several ergot pigments including the yellow ergochrome secalonic acid and its derivatives, as well as the red anthraquinones endocrocin and clavorubin. The pathway begins with the synthesis of atrochrysone thioester by the polyketide synthase (PKS) CPUR_05437. The atrochrysone carboxyl ACP thioesterase CPUR_05436 then breaks the thioester bond and releases the atrochrysone carboxylic acid from CPUR_05437. The atrochrysone carboxylic acid is then converted to atrochrysone which is further transformed into emodin anthrone. The next step is performed by the anthrone oxygenase CPUR_05434 that catalyzes the oxidation of emodinanthrone to emodin. Emodin is further modified to yield monodictyphenone via several steps involving CPUR_05427, CPUR_05428, CPUR_05429 and CPUR_05430. The short chain dehydrogenase/reductase CPUR_05418 then catalyzes the C-5 ketoreduction to give the xanthone skeleton of the monomeric units. Ergochromes formation requires further dimerization steps of different xanthone units, probably catalyzed by the cytochrome P450 monooxygenase CPUR_05419. CPUR_05425, CPUR_05426 and CPUR_05431 are unique to Claviceps, thus it is likely that they are involved in further modification of xanthone units or in their dimerization. The yellow ergochromes and the red anthraquinone pigments endocrocin and clavorubin are products from the same PKS derived precursors and the latter are likely shunt products in the pathway of xanthone biosynthesis. It is proposed that atrochrysone carboxylic acid released from the PKS CPUR_05437 can also be converted to endocrocin anthrone which is further oxidized into endocrocin by CPUR_05435. Endocrocin could be then modified to clavorubin, possibly by CPUR_05423 and CPUR_05431. Clavorubin is the principal anthraquinone metabolite produced by the cluster with a much higher yield compared to endocrocin. This is Methyltransferase CPUR_05424 from Claviceps purpurea (strain 20.1) (Ergot fungus).